The following is a 248-amino-acid chain: Probable transcriptional regulatory protein Mrad2831_3553 (248 aa).

The protein belongs to the TACO1 family.

It is found in the cytoplasm. The polypeptide is Probable transcriptional regulatory protein Mrad2831_3553 (Methylobacterium radiotolerans (strain ATCC 27329 / DSM 1819 / JCM 2831 / NBRC 15690 / NCIMB 10815 / 0-1)).